Reading from the N-terminus, the 142-residue chain is uncharacterized protein (142 aa).

The protein belongs to the GlcG family.

This is an uncharacterized protein from Citrobacter freundii.